A 393-amino-acid chain; its full sequence is Methylthioribose-1-phosphate isomerase (393 aa).

Catalysis depends on D265, which acts as the Proton donor.

It belongs to the eIF-2B alpha/beta/delta subunits family. MtnA subfamily.

Its subcellular location is the cytoplasm. It localises to the nucleus. The catalysed reaction is 5-(methylsulfanyl)-alpha-D-ribose 1-phosphate = 5-(methylsulfanyl)-D-ribulose 1-phosphate. It participates in amino-acid biosynthesis; L-methionine biosynthesis via salvage pathway; L-methionine from S-methyl-5-thio-alpha-D-ribose 1-phosphate: step 1/6. Its function is as follows. Catalyzes the interconversion of methylthioribose-1-phosphate (MTR-1-P) into methylthioribulose-1-phosphate (MTRu-1-P). The protein is Methylthioribose-1-phosphate isomerase of Cryptococcus neoformans var. neoformans serotype D (strain B-3501A) (Filobasidiella neoformans).